A 188-amino-acid chain; its full sequence is NADH-quinone oxidoreductase subunit I 2 (188 aa).

4Fe-4S ferredoxin-type domains are found at residues 56–88 and 98–127; these read HFLKRDDEGEIKCVACELCARICPCDCIEVVPY and AKFEIDTARCLFCGLCEDACPADAIALGQQ. [4Fe-4S] cluster is bound by residues Cys68, Cys71, Cys74, Cys78, Cys107, Cys110, Cys113, and Cys117.

It belongs to the complex I 23 kDa subunit family. In terms of assembly, NDH-1 is composed of 14 different subunits. Subunits NuoA, H, J, K, L, M, N constitute the membrane sector of the complex. It depends on [4Fe-4S] cluster as a cofactor.

It localises to the cell inner membrane. The enzyme catalyses a quinone + NADH + 5 H(+)(in) = a quinol + NAD(+) + 4 H(+)(out). Its function is as follows. NDH-1 shuttles electrons from NADH, via FMN and iron-sulfur (Fe-S) centers, to quinones in the respiratory chain. The immediate electron acceptor for the enzyme in this species is believed to be ubiquinone. Couples the redox reaction to proton translocation (for every two electrons transferred, four hydrogen ions are translocated across the cytoplasmic membrane), and thus conserves the redox energy in a proton gradient. This Rhizobium meliloti (strain 1021) (Ensifer meliloti) protein is NADH-quinone oxidoreductase subunit I 2.